A 318-amino-acid polypeptide reads, in one-letter code: Pantothenate synthetase (318 aa).

ATP is bound at residue 44 to 51 (MGALHQGH). H51 functions as the Proton donor in the catalytic mechanism. Q75 serves as a coordination point for (R)-pantoate. Q75 contributes to the beta-alanine binding site. An ATP-binding site is contributed by 161–164 (GEKD). Position 167 (Q167) interacts with (R)-pantoate. ATP-binding positions include V190 and 198-201 (LSSR). Positions 295–318 (DGHPNLDSQPEPAGTDPALLPPAR) are disordered.

This sequence belongs to the pantothenate synthetase family. As to quaternary structure, homodimer.

Its subcellular location is the cytoplasm. The enzyme catalyses (R)-pantoate + beta-alanine + ATP = (R)-pantothenate + AMP + diphosphate + H(+). The protein operates within cofactor biosynthesis; (R)-pantothenate biosynthesis; (R)-pantothenate from (R)-pantoate and beta-alanine: step 1/1. In terms of biological role, catalyzes the condensation of pantoate with beta-alanine in an ATP-dependent reaction via a pantoyl-adenylate intermediate. The protein is Pantothenate synthetase of Nocardia farcinica (strain IFM 10152).